The chain runs to 908 residues: Autophagy-related protein 9 (908 aa).

Residues 1 to 216 are Cytoplasmic-facing; that stretch reads MADGVIARLM…SGMWCIVVER (216 aa). The interval 64–162 is disordered; that stretch reads SRATVDGRIP…IDQELQPPLH (99 aa). Residues 217–237 traverse the membrane as a helical segment; it reads VLHLIKVAFVAFLLTFLSQCV. Residues 238-259 are Lumenal-facing; it reads DFKKIPSNQKLSQVLVPQCTRN. An N-linked (GlcNAc...) asparagine glycan is attached at Asn259. A helical transmembrane segment spans residues 260 to 280; it reads MSGLWNIGLWLFAFYFMWKSI. Topologically, residues 281–433 are cytoplasmic; sequence QYILDLRRLT…GILSAKLRSR (153 aa). Residues 434-454 lie within the membrane without spanning it; it reads FIFAGVMILILSPFVAGYLII. Over 455-525 the chain is Cytoplasmic; sequence VYFLEYYNEI…KTSMVAKTVS (71 aa). Residues 526–546 traverse the membrane as a helical segment; that stretch reads FIAGSIATVLALISVFDPEMF. Topologically, residues 547–555 are lumenal; sequence LGFEITHDR. The helical transmembrane segment at 556–576 threads the bilayer; it reads TVLFYTAVFGAIWSVARGSVS. Residues 577–622 lie on the Cytoplasmic side of the membrane; that stretch reads EDNAVFDPEYALGNVVEYTHYQPEHWKDRWHSADVKAEFEELYKLK. The stretch at 623 to 643 is an intramembrane region; that stretch reads LVIFIEEILSILTTPFVLFFS. The Cytoplasmic portion of the chain corresponds to 644 to 908; the sequence is LPKSADQIID…HLNRRLGGVR (265 aa). 2 disordered regions span residues 751 to 779 and 809 to 878; these read AASRMGRSQRGRSKGPLPSRTPRPGAVMA and QFRG…DSVV. Residues 813–825 show a composition bias toward gly residues; the sequence is GNQGDGHMMGGGS. A compositionally biased stretch (basic and acidic residues) spans 839-852; the sequence is QTHDDESEDSRAGL.

The protein belongs to the ATG9 family. Homotrimer; forms a homotrimer with a central pore that forms a path between the two membrane leaflets. Phosphorylated by apg-1. Apg-1 phosphorylation is required for preautophagosome elongation.

It is found in the preautophagosomal structure membrane. Its subcellular location is the cytoplasmic vesicle membrane. The protein resides in the golgi apparatus membrane. The protein localises to the endoplasmic reticulum membrane. The catalysed reaction is a 1,2-diacyl-sn-glycero-3-phosphocholine(in) = a 1,2-diacyl-sn-glycero-3-phosphocholine(out). The enzyme catalyses a 1,2-diacyl-sn-glycero-3-phospho-L-serine(in) = a 1,2-diacyl-sn-glycero-3-phospho-L-serine(out). It catalyses the reaction a 1,2-diacyl-sn-glycero-3-phosphoethanolamine(in) = a 1,2-diacyl-sn-glycero-3-phosphoethanolamine(out). It carries out the reaction a 1,2-diacyl-sn-glycero-3-phospho-(1D-myo-inositol-3-phosphate)(in) = a 1,2-diacyl-sn-glycero-3-phospho-(1D-myo-inositol-3-phosphate)(out). In terms of biological role, phospholipid scramblase involved in autophagy and cytoplasm to vacuole transport (Cvt) vesicle formation. Cycles between the preautophagosomal structure/phagophore assembly site (PAS) and the cytoplasmic vesicle pool and supplies membrane for the growing autophagosome. Lipid scramblase activity plays a key role in preautophagosomal structure/phagophore assembly by distributing the phospholipids that arrive through atg-2 from the cytoplasmic to the luminal leaflet of the bilayer, thereby driving autophagosomal membrane expansion. Required for mitophagy. Also involved in endoplasmic reticulum-specific autophagic process and is essential for the survival of cells subjected to severe ER stress. Different machineries are required for anterograde trafficking to the PAS during either the Cvt pathway or bulk autophagy and for retrograde trafficking. This chain is Autophagy-related protein 9 (apg-7), found in Neurospora crassa (strain ATCC 24698 / 74-OR23-1A / CBS 708.71 / DSM 1257 / FGSC 987).